The chain runs to 297 residues: N-acetylneuraminate lyase (297 aa).

Aceneuramate-binding residues include serine 47 and threonine 48. Residue tyrosine 137 is the Proton donor of the active site. Lysine 165 acts as the Schiff-base intermediate with substrate in catalysis. Residues threonine 167, glycine 189, aspartate 191, glutamate 192, and serine 208 each coordinate aceneuramate.

Belongs to the DapA family. NanA subfamily. As to quaternary structure, homotetramer.

The protein localises to the cytoplasm. It catalyses the reaction aceneuramate = aldehydo-N-acetyl-D-mannosamine + pyruvate. The protein operates within amino-sugar metabolism; N-acetylneuraminate degradation; D-fructose 6-phosphate from N-acetylneuraminate: step 1/5. Functionally, catalyzes the reversible aldol cleavage of N-acetylneuraminic acid (sialic acid; Neu5Ac) to form pyruvate and N-acetylmannosamine (ManNAc) via a Schiff base intermediate. The polypeptide is N-acetylneuraminate lyase (Citrobacter koseri (strain ATCC BAA-895 / CDC 4225-83 / SGSC4696)).